Consider the following 108-residue polypeptide: UPF0145 protein LACR_1006 (108 aa).

It belongs to the UPF0145 family.

The protein is UPF0145 protein LACR_1006 of Lactococcus lactis subsp. cremoris (strain SK11).